We begin with the raw amino-acid sequence, 162 residues long: 2-amino-4-hydroxy-6-hydroxymethyldihydropteridine pyrophosphokinase (162 aa).

The protein belongs to the HPPK family.

It catalyses the reaction 6-hydroxymethyl-7,8-dihydropterin + ATP = (7,8-dihydropterin-6-yl)methyl diphosphate + AMP + H(+). It functions in the pathway cofactor biosynthesis; tetrahydrofolate biosynthesis; 2-amino-4-hydroxy-6-hydroxymethyl-7,8-dihydropteridine diphosphate from 7,8-dihydroneopterin triphosphate: step 4/4. In terms of biological role, catalyzes the transfer of pyrophosphate from adenosine triphosphate (ATP) to 6-hydroxymethyl-7,8-dihydropterin, an enzymatic step in folate biosynthesis pathway. This is 2-amino-4-hydroxy-6-hydroxymethyldihydropteridine pyrophosphokinase (folK) from Pseudomonas aeruginosa (strain ATCC 15692 / DSM 22644 / CIP 104116 / JCM 14847 / LMG 12228 / 1C / PRS 101 / PAO1).